The sequence spans 92 residues: MTRSLKKNPFVANHLLRKLDKLNTKEEKEIIVTWSRASTIIPTMIGHTIAIHNGREHLPVYITDRMIGHKLGEFSPTLNFRGHAKNDNRSRR.

Belongs to the universal ribosomal protein uS19 family.

It localises to the plastid. It is found in the chloroplast. Protein S19 forms a complex with S13 that binds strongly to the 16S ribosomal RNA. This chain is Small ribosomal subunit protein uS19c, found in Fagopyrum esculentum subsp. ancestrale (Wild buckwheat).